The primary structure comprises 227 residues: Ubiquitin domain-containing protein 1 (227 aa).

The segment at 1 to 42 (MGNCVGRQRRERPAAPGHPRKRAGRNEPLKKERLKWKSDYPM) is disordered. The span at 24 to 38 (GRNEPLKKERLKWKS) shows a compositional bias: basic and acidic residues. The Ubiquitin-like domain occupies 149–224 (FPLKVRLSTG…IQVIINQPPP (76 aa)).

Interacts with UBTD1.

In terms of biological role, may be involved in the regulation of cellular senescence through a positive feedback loop with TP53. Is a TP53 downstream target gene that increases the stability of TP53 protein by promoting the ubiquitination and degradation of MDM2. The protein is Ubiquitin domain-containing protein 1 (Ubtd1) of Mus musculus (Mouse).